Here is a 431-residue protein sequence, read N- to C-terminus: SH2 domain-containing protein 4B (431 aa).

The segment at 201 to 235 (QASENEEREWEEQLRRSKAADEERSRRAQRARDEY) is disordered. Positions 211–235 (EEQLRRSKAADEERSRRAQRARDEY) are enriched in basic and acidic residues. The 93-residue stretch at 325 to 417 (WFHGIISRES…SGGELLQEPC (93 aa)) folds into the SH2 domain.

The polypeptide is SH2 domain-containing protein 4B (Sh2d4b) (Mus musculus (Mouse)).